A 393-amino-acid chain; its full sequence is Epoxyqueuosine reductase (393 aa).

The active-site Proton donor is aspartate 154. The region spanning 196-228 (LPLPVDIPVQEGCHSCVACITSCPTGAIVEPYT) is the 4Fe-4S ferredoxin-type domain. Cysteine 208, cysteine 211, cysteine 214, cysteine 218, cysteine 234, cysteine 261, cysteine 264, and cysteine 268 together coordinate [4Fe-4S] cluster.

Belongs to the QueG family. As to quaternary structure, monomer. It depends on cob(II)alamin as a cofactor. [4Fe-4S] cluster is required as a cofactor.

It is found in the cytoplasm. It catalyses the reaction epoxyqueuosine(34) in tRNA + AH2 = queuosine(34) in tRNA + A + H2O. It participates in tRNA modification; tRNA-queuosine biosynthesis. In terms of biological role, catalyzes the conversion of epoxyqueuosine (oQ) to queuosine (Q), which is a hypermodified base found in the wobble positions of tRNA(Asp), tRNA(Asn), tRNA(His) and tRNA(Tyr). This is Epoxyqueuosine reductase from Shewanella oneidensis (strain ATCC 700550 / JCM 31522 / CIP 106686 / LMG 19005 / NCIMB 14063 / MR-1).